The sequence spans 133 residues: Interferon alpha-inducible protein 27-like protein 2 (133 aa).

The next 3 helical transmembrane spans lie at 8–28 (AAIGGALAVAAVPAVLGAVGF), 51–71 (GGGVAAGSLVATLQSVGAAGL), and 73–93 (TSSNILLGSIGSAFGALLGGA). A disordered region spans residues 93–133 (AKRASPSPPPGGPRPEGEQPGENVPQVEPPKSPLGPEKHEK).

Belongs to the IFI6/IFI27 family.

The protein resides in the mitochondrion membrane. Its function is as follows. Plays a role in the apoptotic process and has a pro-apoptotic activity. This Bos taurus (Bovine) protein is Interferon alpha-inducible protein 27-like protein 2.